The chain runs to 302 residues: Tyrosine--tRNA ligase 2 (302 aa).

Position 33 (tyrosine 33) interacts with L-tyrosine. Positions proline 38–histidine 47 match the 'HIGH' region motif. The L-tyrosine site is built by tyrosine 160 and glutamine 164. A 'KMSKS' region motif is present at residues lysine 220–serine 224. Lysine 223 provides a ligand contact to ATP.

Belongs to the class-I aminoacyl-tRNA synthetase family. TyrS type 1 subfamily. In terms of assembly, homodimer.

The protein resides in the cytoplasm. It carries out the reaction tRNA(Tyr) + L-tyrosine + ATP = L-tyrosyl-tRNA(Tyr) + AMP + diphosphate + H(+). Its function is as follows. Catalyzes the attachment of tyrosine to tRNA(Tyr) in a two-step reaction: tyrosine is first activated by ATP to form Tyr-AMP and then transferred to the acceptor end of tRNA(Tyr). The protein is Tyrosine--tRNA ligase 2 (tyrS2) of Streptococcus thermophilus (strain CNRZ 1066).